Here is a 319-residue protein sequence, read N- to C-terminus: MGEEVKPEAKEAASAPQAVPAEEEEKKKDVAEEKKVAAEEEKPKEEEEPQPPPPPPPFILYVDLHCVGCAKKIERSILKIRGVEEVVMDMNENQVTIKGVLDPQAVCNKIKKKTKRMAKVLSPLPAAEGEPLPPIITSQVSGGLTTVELSVNMHCQACADQLKKKILKMRGVQTTVTEHTTGKVIVTGTMDAEKLVDYVYRRTKKQARIVPQPDPEPEAPAAAQEEKKEESGEGNEKPPETGEEKEEEKKKEGEENGEEGGGEEAAATEEERRDNEMTAMAQEEGMKRMMYYYQPSYVIERIPPPQLFSDENPNACCIS.

Basic and acidic residues-rich tracts occupy residues 1 to 11 (MGEEVKPEAKE) and 24 to 45 (EEKK…KPKE). The disordered stretch occupies residues 1–57 (MGEEVKPEAKEAASAPQAVPAEEEEKKKDVAEEKKVAAEEEKPKEEEEPQPPPPPPP). The stretch at 21–48 (AEEEEKKKDVAEEKKVAAEEEKPKEEEE) forms a coiled coil. HMA domains are found at residues 55-118 (PPPF…KRMA) and 144-208 (LTTV…KQAR). The a metal cation site is built by Cys66, Cys69, Cys155, and Cys158. The interval 207 to 282 (ARIVPQPDPE…RDNEMTAMAQ (76 aa)) is disordered. The segment covering 224 to 254 (QEEKKEESGEGNEKPPETGEEKEEEKKKEGE) has biased composition (basic and acidic residues). The span at 255–268 (ENGEEGGGEEAAAT) shows a compositional bias: acidic residues. At Cys316 the chain carries Cysteine methyl ester. Cys316 carries S-farnesyl cysteine lipidation. The propeptide at 317–319 (CIS) is removed in mature form.

The protein belongs to the HIPP family.

Its function is as follows. Heavy-metal-binding protein. The sequence is that of Heavy metal-associated isoprenylated plant protein 9 from Arabidopsis thaliana (Mouse-ear cress).